A 382-amino-acid chain; its full sequence is Protein RecA (382 aa).

79 to 86 (GPESSGKT) lines the ATP pocket.

Belongs to the RecA family.

The protein resides in the cytoplasm. In terms of biological role, can catalyze the hydrolysis of ATP in the presence of single-stranded DNA, the ATP-dependent uptake of single-stranded DNA by duplex DNA, and the ATP-dependent hybridization of homologous single-stranded DNAs. It interacts with LexA causing its activation and leading to its autocatalytic cleavage. In Streptococcus sanguinis (strain SK36), this protein is Protein RecA.